We begin with the raw amino-acid sequence, 217 residues long: Cytochrome c biogenesis ATP-binding export protein CcmA (217 aa).

The ABC transporter domain maps to 16–214; it reads LVLEQLSCER…AHGQAEVTEG (199 aa). Position 48–55 (48–55) interacts with ATP; the sequence is GANGAGKT.

This sequence belongs to the ABC transporter superfamily. CcmA exporter (TC 3.A.1.107) family. As to quaternary structure, the complex is composed of two ATP-binding proteins (CcmA) and two transmembrane proteins (CcmB).

The protein resides in the cell inner membrane. The catalysed reaction is heme b(in) + ATP + H2O = heme b(out) + ADP + phosphate + H(+). Part of the ABC transporter complex CcmAB involved in the biogenesis of c-type cytochromes; once thought to export heme, this seems not to be the case, but its exact role is uncertain. Responsible for energy coupling to the transport system. The chain is Cytochrome c biogenesis ATP-binding export protein CcmA from Alcanivorax borkumensis (strain ATCC 700651 / DSM 11573 / NCIMB 13689 / SK2).